A 200-amino-acid polypeptide reads, in one-letter code: MAASAGPEIERLIALLSKLPGLGPRSGRRAALALLKKRDTLLAPLATAMAEAQAKVRTCGTCGSLDVTDPCAVCADGSRDGRLLCVVEEVGSVWAMERGGSFKGRYHVLGGLLSALDGIGPEALRIGELVGRVADGSVAEVILALPATVDGQTTAHYIADRLAKTNVPVTMLARGVPVGGDLDWLDDGTIAQALRARRPA.

The segment at 59–74 (CGTCGSLDVTDPCAVC) adopts a C4-type zinc-finger fold. The Toprim domain maps to 82–177 (RLLCVVEEVG…PVTMLARGVP (96 aa)).

It belongs to the RecR family.

In terms of biological role, may play a role in DNA repair. It seems to be involved in an RecBC-independent recombinational process of DNA repair. It may act with RecF and RecO. In Caulobacter vibrioides (strain ATCC 19089 / CIP 103742 / CB 15) (Caulobacter crescentus), this protein is Recombination protein RecR.